Consider the following 202-residue polypeptide: MPIGVPKVPFRSPGEEDAVWVDVYNRLHRERLLFLGQEVDSEISNQLVGLMVYLSIEDDTRDLYLFINSPGGWVIPGIAIYDTMQFVPPDVHTICMGLAASMGSFILVGGEITKRLAFPHARVMIHQPASSFYEAPTGEFILEAEELLKLRETLTRVYVQRTGNPLWVISEDMERDVFMSATEAQAHGIVDVVAVENTGDFT.

The Nucleophile role is filled by Ser-101. The active site involves His-126.

The protein belongs to the peptidase S14 family. Component of the chloroplastic Clp protease core complex.

It localises to the plastid. The protein localises to the chloroplast stroma. The enzyme catalyses Hydrolysis of proteins to small peptides in the presence of ATP and magnesium. alpha-casein is the usual test substrate. In the absence of ATP, only oligopeptides shorter than five residues are hydrolyzed (such as succinyl-Leu-Tyr-|-NHMec, and Leu-Tyr-Leu-|-Tyr-Trp, in which cleavage of the -Tyr-|-Leu- and -Tyr-|-Trp bonds also occurs).. In terms of biological role, cleaves peptides in various proteins in a process that requires ATP hydrolysis. Has a chymotrypsin-like activity. Plays a major role in the degradation of misfolded proteins. In Drimys granadensis, this protein is ATP-dependent Clp protease proteolytic subunit.